The primary structure comprises 217 residues: Somatotropin (217 aa).

An N-terminal signal peptide occupies residues 1 to 27; the sequence is MMAAGPRASLLLAFALLCLPWTQEVGA. H46 is a Zn(2+) binding site. The cysteines at positions 79 and 190 are disulfide-linked. A Phosphoserine modification is found at S132. Residue E199 coordinates Zn(2+). A disulfide bond links C207 and C215.

This sequence belongs to the somatotropin/prolactin family.

It localises to the secreted. In terms of biological role, plays an important role in growth control. Its major role in stimulating body growth is to stimulate the liver and other tissues to secrete IGF1. It stimulates both the differentiation and proliferation of myoblasts. It also stimulates amino acid uptake and protein synthesis in muscle and other tissues. The chain is Somatotropin (GH1) from Cervus elaphus (Red deer).